The sequence spans 227 residues: PKHD-type hydroxylase NE2125 (227 aa).

The Fe2OG dioxygenase domain maps to 78-179 (KIVPPFFNRY…RLACFMFIQS (102 aa)). Positions 97, 99, and 160 each coordinate Fe cation. A 2-oxoglutarate-binding site is contributed by arginine 170.

It depends on Fe(2+) as a cofactor. Requires L-ascorbate as cofactor.

The sequence is that of PKHD-type hydroxylase NE2125 from Nitrosomonas europaea (strain ATCC 19718 / CIP 103999 / KCTC 2705 / NBRC 14298).